Consider the following 225-residue polypeptide: NAD(P)H-quinone oxidoreductase subunit K, chloroplastic (225 aa).

Residues Cys-43, Cys-44, Cys-108, and Cys-139 each coordinate [4Fe-4S] cluster.

The protein belongs to the complex I 20 kDa subunit family. In terms of assembly, NDH is composed of at least 16 different subunits, 5 of which are encoded in the nucleus. [4Fe-4S] cluster is required as a cofactor.

It is found in the plastid. The protein resides in the chloroplast thylakoid membrane. The enzyme catalyses a plastoquinone + NADH + (n+1) H(+)(in) = a plastoquinol + NAD(+) + n H(+)(out). It carries out the reaction a plastoquinone + NADPH + (n+1) H(+)(in) = a plastoquinol + NADP(+) + n H(+)(out). Its function is as follows. NDH shuttles electrons from NAD(P)H:plastoquinone, via FMN and iron-sulfur (Fe-S) centers, to quinones in the photosynthetic chain and possibly in a chloroplast respiratory chain. The immediate electron acceptor for the enzyme in this species is believed to be plastoquinone. Couples the redox reaction to proton translocation, and thus conserves the redox energy in a proton gradient. This Vitis vinifera (Grape) protein is NAD(P)H-quinone oxidoreductase subunit K, chloroplastic.